A 246-amino-acid chain; its full sequence is Bis(5'-nucleosyl)-tetraphosphatase PrpE [asymmetrical] (246 aa).

This sequence belongs to the PrpE family. Ni(2+) serves as cofactor.

The enzyme catalyses P(1),P(4)-bis(5'-guanosyl) tetraphosphate + H2O = GMP + GTP + 2 H(+). Its function is as follows. Asymmetrically hydrolyzes Ap4p to yield AMP and ATP. The protein is Bis(5'-nucleosyl)-tetraphosphatase PrpE [asymmetrical] of Bacillus cereus (strain ZK / E33L).